A 256-amino-acid polypeptide reads, in one-letter code: Cell division protein DivIB (256 aa).

At 1–23 (MSKDLISTDEYIKIKKKRKRIKK) the chain is on the cytoplasmic side. Residues 24–44 (IVVLFIFLISILVTLCLKIPY) traverse the membrane as a helical segment. Residues 45-113 (FNIESIEIKG…NKLQIYVKER (69 aa)) enclose the POTRA domain. The Extracellular portion of the chain corresponds to 45–256 (FNIESIEIKG…EGNPVFYIEK (212 aa)).

It belongs to the FtsQ/DivIB family. DivIB subfamily.

It is found in the cell membrane. In terms of biological role, cell division protein that may be involved in stabilizing or promoting the assembly of the division complex. This chain is Cell division protein DivIB, found in Clostridium botulinum (strain Hall / ATCC 3502 / NCTC 13319 / Type A).